Here is a 47-residue protein sequence, read N- to C-terminus: Delta-actitoxin-Ael1a (47 aa).

Intrachain disulfides connect Cys4-Cys44, Cys6-Cys34, and Cys27-Cys45.

It belongs to the sea anemone sodium channel inhibitory toxin family. Type I subfamily. In terms of tissue distribution, expressed in ectodermal glands. Not expressed in nematocytes.

It localises to the secreted. Its function is as follows. Binds specifically to voltage-gated sodium channels (Nav), thereby delaying their inactivation during signal transduction. It strongly stimulates mammalian cardiac muscle contraction. Paralyzes the shore crab (C.maenas) by tetanic contractions after intramuscular injection. The protein is Delta-actitoxin-Ael1a of Anthopleura elegantissima (Green aggregating anemone).